The sequence spans 354 residues: MLEEKGIERRDFMKWAGAMTAMLSLPATFTPLTAKAAELADRLPVIWLHMAECTGCSESLLRTDGPGIDSLIFDYISLEYHETVMAAAGWQAEHNLEHAIEKYKGRYVLMVEGGIPAGSSEFYLTVGPHGTTGAEHARHASANAAAIFAIGSCSSFGGVQAARPNPTNAQPLSKVTNKPVINVPGCPPSEKNIVGNVLHFILFGTLPSVDAFNRPMWAYGLRIHDLCERRGRFDAGEFVQEFGDEGAKKGYCLYKVGCKGPYTFNNCSKLRFNQHTSWPVQAGHGCIGCSEPDFWDTMGPFEEPVANRLYATAFDGLGADKTADKIGITLLAATAVGVAAHAVLSMMVKDKENN.

Positions 1-36 (MLEEKGIERRDFMKWAGAMTAMLSLPATFTPLTAKA) form a signal peptide, tat-type signal. Residues Cys53, Cys56, Cys153, Cys186, His224, Cys227, Cys252, and Cys258 each coordinate [4Fe-4S] cluster. [3Fe-4S] cluster-binding residues include Cys267, Cys286, and Cys289.

The protein belongs to the [NiFe]/[NiFeSe] hydrogenase small subunit family. In terms of assembly, heterodimer of a large and a small subunit. Requires [4Fe-4S] cluster as cofactor. The cofactor is [3Fe-4S] cluster. Post-translationally, predicted to be exported by the Tat system. The position of the signal peptide cleavage has been experimentally proven.

It localises to the cell membrane. It carries out the reaction H2 + a menaquinone = a menaquinol. In Wolinella succinogenes (strain ATCC 29543 / DSM 1740 / CCUG 13145 / JCM 31913 / LMG 7466 / NCTC 11488 / FDC 602W) (Vibrio succinogenes), this protein is Quinone-reactive Ni/Fe-hydrogenase small chain (hydA).